A 146-amino-acid chain; its full sequence is MKLHELQPAAGSRKAPKRVGRGTGSGLGRNAGKGEKGQNARSGGGVRPGFEGGQMPLYRRLPKRGFTNIFAKRYVSINVDRLNIFENGTEITPEVLLERRVVSKVLDGVKILGNGNLEKSLIVKGCKFSKSAIEKIEAAGGKVEVI.

The segment at 1–54 (MKLHELQPAAGSRKAPKRVGRGTGSGLGRNAGKGEKGQNARSGGGVRPGFEGGQ) is disordered. 2 stretches are compositionally biased toward gly residues: residues 21–31 (RGTGSGLGRNA) and 42–52 (SGGGVRPGFEG).

This sequence belongs to the universal ribosomal protein uL15 family. As to quaternary structure, part of the 50S ribosomal subunit.

Binds to the 23S rRNA. The protein is Large ribosomal subunit protein uL15 of Clostridium botulinum (strain Eklund 17B / Type B).